The chain runs to 366 residues: MCRLSMPDAIVPFAKVSGLTSFAALAQVRRLLGVKKVGHTGTLDRFADGLLLLLVGGFTKLAPVMTRLEKSYEARIQFGVQTDTLDPEGAVVRCSLFPTFARVRAALPHFTGSIDQVPPEYSALKFGGVRASDRVRRGEAVCMKARRVFVFDLQVLGCEADLGEFKKTQAGRGAAIADLDLTRVRAVTLYVRCSAGFYVRALARDIAAACGSCAYVSHLRRTRIGPFDLAQAAGVSRLGSWTWGKERASCGAACFDVGAPPPPSSGGVATDSVSFGCEDLTVREIKQAVVSCDVDFANRIGLTACSVHAQYASRFLHGERIRACWFQSFGTRRPGERALVFSEGRCLGLIRKAANGFSYDAVFCTE.

Residue aspartate 44 is the Nucleophile of the active site.

The protein belongs to the pseudouridine synthase TruB family. Type 1 subfamily.

It catalyses the reaction uridine(55) in tRNA = pseudouridine(55) in tRNA. Its function is as follows. Responsible for synthesis of pseudouridine from uracil-55 in the psi GC loop of transfer RNAs. This chain is tRNA pseudouridine synthase B, found in Treponema pallidum (strain Nichols).